The sequence spans 605 residues: MALRKGGLALALLLLSWVALGPRSLEGADPGTPGEAEGPACPAACVCSYDDDADELSVFCSSRNLTRLPDGVPGGTQALWLDGNNLSSVPPAAFQNLSSLGFLNLQGGQLGSLEPQALLGLENLCHLHLERNQLRSLALGTFAHTPALASLGLSNNRLSRLEDGLFEGLGSLWDLNLGWNSLAVLPDAAFRGLGSLRELVLAGNRLAYLQPALFSGLAELRELDLSRNALRAIKANVFVQLPRLQKLYLDRNLIAAVAPGAFLGLKALRWLDLSHNRVAGLLEDTFPGLLGLRVLRLSHNAIASLRPRTFKDLHFLEELQLGHNRIRQLAERSFEGLGQLEVLTLDHNQLQEVKAGAFLGLTNVAVMNLSGNCLRNLPEQVFRGLGKLHSLHLEGSCLGRIRPHTFTGLSGLRRLFLKDNGLVGIEEQSLWGLAELLELDLTSNQLTHLPHRLFQGLGKLEYLLLSRNRLAELPADALGPLQRAFWLDVSHNRLEALPNSLLAPLGRLRYLSLRNNSLRTFTPQPPGLERLWLEGNPWDCGCPLKALRDFALQNPSAVPRFVQAICEGDDCQPPAYTYNNITCASPPEVVGLDLRDLSEAHFAPC.

The signal sequence occupies residues 1–27 (MALRKGGLALALLLLSWVALGPRSLEG). One can recognise an LRRNT domain in the interval 32–74 (TPGEAEGPACPAACVCSYDDDADELSVFCSSRNLTRLPDGVPG). Intrachain disulfides connect Cys-41/Cys-47 and Cys-45/Cys-60. Residues Asn-64, Asn-85, and Asn-96 are each glycosylated (N-linked (GlcNAc...) asparagine). LRR repeat units lie at residues 75–96 (GTQA…AFQN), 99–120 (SLGF…ALLG), 123–144 (NLCH…TFAH), 147–168 (ALAS…LFEG), 171–192 (SLWD…AFRG), 195–216 (SLRE…LFSG), 219–240 (ELRE…VFVQ), 243–264 (RLQK…AFLG), 267–288 (ALRW…TFPG), 291–312 (GLRV…TFKD), 315–336 (FLEE…SFEG), 339–360 (QLEV…AFLG), 363–384 (NVAV…VFRG), 387–408 (KLHS…TFTG), 411–432 (GLRR…SLWG), 435–456 (ELLE…LFQG), 459–480 (KLEY…ALGP), 483–504 (RAFW…LLAP), and 507–528 (RLRY…PPGL). Asn-368 carries N-linked (GlcNAc...) asparagine glycosylation. Asn-515 carries N-linked (GlcNAc...) asparagine glycosylation. One can recognise an LRRCT domain in the interval 536–605 (NPWDCGCPLK…DLSEAHFAPC (70 aa)). Intrachain disulfides connect Cys-540–Cys-583, Cys-542–Cys-605, and Cys-566–Cys-571. N-linked (GlcNAc...) asparagine glycosylation occurs at Asn-580.

Forms a ternary complex with IGF1 and IGFBP3. As to expression, plasma.

The protein resides in the secreted. It localises to the extracellular space. Functionally, involved in protein-protein interactions that result in protein complexes, receptor-ligand binding or cell adhesion. The polypeptide is Insulin-like growth factor-binding protein complex acid labile subunit (IGFALS) (Homo sapiens (Human)).